Here is a 365-residue protein sequence, read N- to C-terminus: Elongation factor Tu (365 aa).

GTP contacts are provided by residues 1–7, 62–66, and 117–120; these read HVDHGKT, DCPGH, and NKCD. In terms of domain architecture, tr-type G spans 1 to 185; that stretch reads HVDHGKTTLT…TLDSYIPTPE (185 aa). Thr7 provides a ligand contact to Mg(2+).

The protein belongs to the TRAFAC class translation factor GTPase superfamily. Classic translation factor GTPase family. EF-Tu/EF-1A subfamily. Monomer.

The protein resides in the cytoplasm. The enzyme catalyses GTP + H2O = GDP + phosphate + H(+). Its function is as follows. GTP hydrolase that promotes the GTP-dependent binding of aminoacyl-tRNA to the A-site of ribosomes during protein biosynthesis. This is Elongation factor Tu from Buchnera aphidicola subsp. Schlechtendalia chinensis.